The following is a 418-amino-acid chain: Gamma-glutamyl phosphate reductase (418 aa).

Belongs to the gamma-glutamyl phosphate reductase family.

It is found in the cytoplasm. It carries out the reaction L-glutamate 5-semialdehyde + phosphate + NADP(+) = L-glutamyl 5-phosphate + NADPH + H(+). It functions in the pathway amino-acid biosynthesis; L-proline biosynthesis; L-glutamate 5-semialdehyde from L-glutamate: step 2/2. Its function is as follows. Catalyzes the NADPH-dependent reduction of L-glutamate 5-phosphate into L-glutamate 5-semialdehyde and phosphate. The product spontaneously undergoes cyclization to form 1-pyrroline-5-carboxylate. The polypeptide is Gamma-glutamyl phosphate reductase (Marinobacter nauticus (strain ATCC 700491 / DSM 11845 / VT8) (Marinobacter aquaeolei)).